A 210-amino-acid chain; its full sequence is Probable glutathione S-transferase gst-36 (210 aa).

In terms of domain architecture, GST N-terminal spans 2–79 (PHFKFYYFDV…YLGHQFHRAG (78 aa)). Glutathione-binding positions include tyrosine 8, tryptophan 39, lysine 43, 49-51 (GQV), and 63-64 (QT). Residues 81-210 (NAVDCARLDM…YVSQRKATPA (130 aa)) enclose the GST C-terminal domain.

This sequence belongs to the GST superfamily. Sigma family.

It catalyses the reaction RX + glutathione = an S-substituted glutathione + a halide anion + H(+). Conjugation of reduced glutathione to a wide number of exogenous and endogenous hydrophobic electrophiles. The sequence is that of Probable glutathione S-transferase gst-36 (gst-36) from Caenorhabditis elegans.